A 344-amino-acid chain; its full sequence is Krueppel-like factor 3 (344 aa).

The repressor domain stretch occupies residues 1–74; that stretch reads MLMFDPVPVK…TVNKRGSPPA (74 aa). A Glycyl lysine isopeptide (Lys-Gly) (interchain with G-Cter in SUMO) cross-link involves residue lysine 10. A 9aaTAD; inactive motif is present at residues 60–68; it reads EPVDLTVNK. A CTBP-binding motif motif is present at residues 61–65; it reads PVDLT. A disordered region spans residues 66–111; sequence VNKRGSPPAAGGSPSSLKFPSHRRASPGLSMPSSSPPIKKYSPPSP. Lysine 68 is covalently cross-linked (Glycyl lysine isopeptide (Lys-Gly) (interchain with G-Cter in SUMO2)). Composition is skewed to low complexity over residues 70–81 and 91–107; these read GSPPAAGGSPSS and SPGL…KKYS. 5 positions are modified to phosphoserine: serine 71, serine 91, serine 100, serine 107, and serine 110. Lysine 195 participates in a covalent cross-link: Glycyl lysine isopeptide (Lys-Gly) (interchain with G-Cter in SUMO2). Lysine 197 participates in a covalent cross-link: Glycyl lysine isopeptide (Lys-Gly) (interchain with G-Cter in SUMO); alternate. Lysine 197 participates in a covalent cross-link: Glycyl lysine isopeptide (Lys-Gly) (interchain with G-Cter in SUMO2); alternate. 3 positions are modified to phosphoserine: serine 215, serine 223, and serine 249. The tract at residues 235-254 is disordered; the sequence is SVIVQPGKRPLPVESPDTQR. 3 C2H2-type zinc fingers span residues 259-283, 289-313, and 319-341; these read HRCD…RRTH, YKCT…FRKH, and FQCP…RKRH.

This sequence belongs to the krueppel C2H2-type zinc-finger protein family. In terms of assembly, monomer. Sumoylated with SUMO1. Sumoylation is enhanced by PIAS1, PIAS2alpha and PIAS2beta, and PIAS4, but not by Pc2. Enhances transcriptional repression, but has no effect on DNA binding. Sumoylation on Lys-197 is the major site. As to expression, in 8.5 day embryos, expressed in midbrain, anterior hindbrain and ventral forebrain. In 9 day embryos, expressed throughout ventral anterior half of embryo including midbrain-hindbrain junction, ventral midbrain, diencephalon and forebrain. At 10.5 days, distribution is more widespread with expression also found in developing limb buds. Widely expressed in the adult.

The protein resides in the nucleus. Functionally, binds to the CACCC box of erythroid cell-expressed genes. May play a role in hematopoiesis. The chain is Krueppel-like factor 3 (Klf3) from Mus musculus (Mouse).